The primary structure comprises 564 residues: Zyxin (564 aa).

At A2 the chain carries N-acetylalanine. A disordered region spans residues 30–141; it reads VAPKPKVNPF…TQLPPQPREK (112 aa). Pro residues-rich tracts occupy residues 63–78 and 93–109; these read IPPP…PPPL and FPPP…PPAP. 4 positions are modified to phosphoserine: S117, S144, S170, and S171. A disordered region spans residues 162–344; that stretch reads NDPFKARVSS…RSPGGPGPLT (183 aa). 2 stretches are compositionally biased toward pro residues: residues 174–189 and 197–214; these read VPPP…PSTK and PLPP…PQPQ. Phosphothreonine is present on T180. The span at 234 to 243 shows a compositional bias: polar residues; the sequence is QPVSSANTQP. Position 244 is an asymmetric dimethylarginine (R244). Residues 255 to 275 show a composition bias toward low complexity; that stretch reads PKFAPVAPKFTPVVSKFSPGA. 2 positions are modified to N6-acetyllysine: K256 and K263. Phosphothreonine is present on T265. K270 is modified (N6-acetyllysine). Phosphoserine occurs at positions 272 and 300. Positions 294-310 are enriched in polar residues; it reads SSVSTGSPQPPSFTYAQ. Basic and acidic residues predominate over residues 311-322; sequence QKEKPLVQEKQH. S336 carries the phosphoserine modification. 3 LIM zinc-binding domains span residues 376–435, 436–495, and 496–562; these read CGKC…TLEK, CNTC…YAPR, and CSVC…SARA.

Belongs to the zyxin/ajuba family. In terms of assembly, interacts, via the Pro-rich regions, with the EVH1 domains of ENAH, EVL and VASP. Interacts with the first LIM domain of TES. Interacts with SYNPO2.

It is found in the cytoplasm. The protein resides in the cytoskeleton. The protein localises to the cell junction. It localises to the focal adhesion. Its subcellular location is the nucleus. Its function is as follows. Adhesion plaque protein. Binds alpha-actinin and the CRP protein. Important for targeting TES and ENA/VASP family members to focal adhesions and for the formation of actin-rich structures. May be a component of a signal transduction pathway that mediates adhesion-stimulated changes in gene expression. In Mus musculus (Mouse), this protein is Zyxin (Zyx).